The chain runs to 2304 residues: Protein Ycf2 (2304 aa).

1637–1644 (GSIGTGRS) contributes to the ATP binding site.

It belongs to the Ycf2 family.

The protein resides in the plastid. Its subcellular location is the chloroplast stroma. Probable ATPase of unknown function. Its presence in a non-photosynthetic plant (Epifagus virginiana) and experiments in tobacco indicate that it has an essential function which is probably not related to photosynthesis. This Amborella trichopoda protein is Protein Ycf2.